A 426-amino-acid polypeptide reads, in one-letter code: Histidine--tRNA ligase (426 aa).

It belongs to the class-II aminoacyl-tRNA synthetase family.

It localises to the cytoplasm. The enzyme catalyses tRNA(His) + L-histidine + ATP = L-histidyl-tRNA(His) + AMP + diphosphate + H(+). The protein is Histidine--tRNA ligase (hisS) of Thermoplasma volcanium (strain ATCC 51530 / DSM 4299 / JCM 9571 / NBRC 15438 / GSS1).